Here is a 354-residue protein sequence, read N- to C-terminus: F-box/kelch-repeat protein At1g80440 (354 aa).

The 48-residue stretch at 2 to 49 (ELIPNLPDDVARECLLRSSYQQFPVIASVCRAWNREVSLSQFLHQRKA) folds into the F-box domain. Kelch repeat units follow at residues 63-110 (RVDP…CRLV), 115-163 (DLIV…ASDS), 166-213 (TVLV…FHAG), and 215-263 (FHVI…PPTC).

This chain is F-box/kelch-repeat protein At1g80440, found in Arabidopsis thaliana (Mouse-ear cress).